Consider the following 122-residue polypeptide: Early nodulin-10 (122 aa).

The signal sequence occupies residues 1 to 36 (MTCTLKSPPKMASFFLSSLVLMFIAALILLPQGLAA). 10 tandem repeats follow at residues 45 to 49 (PPDSE), 51 to 55 (PPYRN), 58 to 62 (PPFAL), 68 to 72 (APIYK), 77 to 81 (PPIYN), 82 to 86 (PPIYE), 88 to 92 (PPTYK), 99 to 103 (PPPFQ), 106 to 110 (PPFYK), and 113 to 117 (PPSQK). The 10 X 5 AA approximate repeats of P-P-X-X-X stretch occupies residues 45-117 (PPDSELPPYR…FYKQAPPSQK (73 aa)). The interval 90-122 (TYKPSKKRLPPPFQKLPPFYKQAPPSQKLPRVN) is disordered.

As to expression, root nodules. In early nodules, expressed only in the interior of the developing nodule with no expression in other nodule tissues, including meristem. In slightly older nodules, expressed in almost all cells of the central zone. In more mature nodules, expression is restricted to the invasion zone.

The sequence is that of Early nodulin-10 (ENOD10) from Medicago sativa (Alfalfa).